A 185-amino-acid chain; its full sequence is Ribosome-recycling factor (185 aa).

This sequence belongs to the RRF family.

It is found in the cytoplasm. Functionally, responsible for the release of ribosomes from messenger RNA at the termination of protein biosynthesis. May increase the efficiency of translation by recycling ribosomes from one round of translation to another. In Actinobacillus pleuropneumoniae serotype 5b (strain L20), this protein is Ribosome-recycling factor.